Consider the following 101-residue polypeptide: Small ribosomal subunit protein uS14 (101 aa).

The protein belongs to the universal ribosomal protein uS14 family. As to quaternary structure, part of the 30S ribosomal subunit. Contacts proteins S3 and S10.

In terms of biological role, binds 16S rRNA, required for the assembly of 30S particles and may also be responsible for determining the conformation of the 16S rRNA at the A site. The protein is Small ribosomal subunit protein uS14 of Nitrosospira multiformis (strain ATCC 25196 / NCIMB 11849 / C 71).